Reading from the N-terminus, the 342-residue chain is Ferrochelatase (342 aa).

Residues histidine 188 and glutamate 268 each coordinate Fe cation.

It belongs to the ferrochelatase family.

The protein resides in the cytoplasm. It carries out the reaction heme b + 2 H(+) = protoporphyrin IX + Fe(2+). It participates in porphyrin-containing compound metabolism; protoheme biosynthesis; protoheme from protoporphyrin-IX: step 1/1. Its function is as follows. Catalyzes the ferrous insertion into protoporphyrin IX. The chain is Ferrochelatase from Rickettsia prowazekii (strain Madrid E).